A 602-amino-acid chain; its full sequence is Pentatricopeptide repeat-containing protein At5g11310, mitochondrial (602 aa).

Residues Met-1–Ser-35 constitute a mitochondrion transit peptide. 11 PPR repeats span residues Ser-134 to Asp-165, Ser-172 to Tyr-202, Glu-211 to Thr-241, Ser-249 to Pro-283, Thr-284 to Ile-318, Asn-319 to Pro-353, Thr-354 to Pro-388, Thr-389 to Pro-423, Asp-424 to Pro-458, Asp-459 to Pro-493, and Gln-494 to Lys-528.

Belongs to the PPR family. P subfamily.

The protein localises to the mitochondrion. In Arabidopsis thaliana (Mouse-ear cress), this protein is Pentatricopeptide repeat-containing protein At5g11310, mitochondrial.